A 703-amino-acid chain; its full sequence is Zinc finger protein 750 (703 aa).

Residues 25–51 (YKCFQCPFTCNEKSHLFNHMKYGLCKN) form a CCHC-type zinc finger. Residues Cys-27, Cys-30, His-43, and Cys-49 each coordinate Zn(2+). 4 disordered regions span residues 60-96 (DRVP…SGLS), 121-147 (GPHR…EAAV), 362-617 (PSKL…EQKQ), and 633-703 (NVEP…TRVS). Residues 67 to 78 (KPNSSDPKQTNQ) are compositionally biased toward polar residues. The span at 79-93 (PDPVVKPTSSKPVPS) shows a compositional bias: low complexity. A compositionally biased stretch (basic and acidic residues) spans 375–399 (TELEKQSPTPEAKEPSKDGQRDTEG). The segment covering 418–428 (SPTNFTQTSQP) has biased composition (polar residues). Residues 583 to 592 (SSGDGPDPSS) are compositionally biased toward low complexity. Basic and acidic residues predominate over residues 605–616 (QDIRAADSDEQK).

The protein localises to the nucleus. In terms of biological role, transcription factor involved in epidermis differentiation. Required for terminal epidermal differentiation: acts downstream of p63/TP63 and activates expression of late epidermal differentiation genes. Specifically binds to the promoter of KLF4 and promotes its expression. In Bos taurus (Bovine), this protein is Zinc finger protein 750 (ZNF750).